The sequence spans 256 residues: Hydroxyacylglutathione hydrolase (256 aa).

Zn(2+) is bound by residues histidine 57, histidine 59, aspartate 61, histidine 62, histidine 115, aspartate 134, and histidine 172.

The protein belongs to the metallo-beta-lactamase superfamily. Glyoxalase II family. As to quaternary structure, monomer. The cofactor is Zn(2+).

It catalyses the reaction an S-(2-hydroxyacyl)glutathione + H2O = a 2-hydroxy carboxylate + glutathione + H(+). The protein operates within secondary metabolite metabolism; methylglyoxal degradation; (R)-lactate from methylglyoxal: step 2/2. Its function is as follows. Thiolesterase that catalyzes the hydrolysis of S-D-lactoyl-glutathione to form glutathione and D-lactic acid. This is Hydroxyacylglutathione hydrolase from Maricaulis maris (strain MCS10) (Caulobacter maris).